We begin with the raw amino-acid sequence, 280 residues long: Aspartate/glutamate leucyltransferase (280 aa).

It belongs to the R-transferase family. Bpt subfamily.

The protein resides in the cytoplasm. The catalysed reaction is N-terminal L-glutamyl-[protein] + L-leucyl-tRNA(Leu) = N-terminal L-leucyl-L-glutamyl-[protein] + tRNA(Leu) + H(+). The enzyme catalyses N-terminal L-aspartyl-[protein] + L-leucyl-tRNA(Leu) = N-terminal L-leucyl-L-aspartyl-[protein] + tRNA(Leu) + H(+). Its function is as follows. Functions in the N-end rule pathway of protein degradation where it conjugates Leu from its aminoacyl-tRNA to the N-termini of proteins containing an N-terminal aspartate or glutamate. This is Aspartate/glutamate leucyltransferase from Cereibacter sphaeroides (strain ATCC 17023 / DSM 158 / JCM 6121 / CCUG 31486 / LMG 2827 / NBRC 12203 / NCIMB 8253 / ATH 2.4.1.) (Rhodobacter sphaeroides).